A 221-amino-acid polypeptide reads, in one-letter code: GTP cyclohydrolase III (221 aa).

It belongs to the archaeal-type GTP cyclohydrolase family.

The enzyme catalyses GTP + 3 H2O = 2-amino-5-formylamino-6-(5-phospho-D-ribosylamino)pyrimidin-4(3H)-one + 2 phosphate + 2 H(+). Functionally, catalyzes the formation of 2-amino-5-formylamino-6-ribofuranosylamino-4(3H)-pyrimidinone ribonucleotide monophosphate and inorganic phosphate from GTP. Also has an independent pyrophosphate phosphohydrolase activity. This chain is GTP cyclohydrolase III, found in Pyrobaculum calidifontis (strain DSM 21063 / JCM 11548 / VA1).